The chain runs to 102 residues: Sulfur globule protein CV3 (102 aa).

Positions 1–25 are cleaved as a signal peptide; it reads MTMKRLLLVSTLAGASALATLPANA.

As to quaternary structure, the protein envelope of the sulfur globules is composed of the three different proteins CV1, CV2 and CV3.

Structural protein of the sulfur globules, which are intracellular globules that serve for sulfur storage in purple sulfur bacteria. The chain is Sulfur globule protein CV3 (sgpC) from Allochromatium vinosum (strain ATCC 17899 / DSM 180 / NBRC 103801 / NCIMB 10441 / D) (Chromatium vinosum).